The following is a 177-amino-acid chain: MKKPVGTTEVILAPGQVSFATRPTRLRTLLGSCVAITFWHPQRLIGGMCHFMLPGRLRKHQPLDGRYADEALELLLRHAQVNGTHARDYQVKLFGGGEMFPDLHRRLPTQDVASLNIRAALALAERYHLHLTAQDMGSTGYRTIMFDLWNGNVWVRHQPMGLLQEDAYQKNQCAGGR.

This sequence belongs to the CheD family.

The catalysed reaction is L-glutaminyl-[protein] + H2O = L-glutamyl-[protein] + NH4(+). Its function is as follows. Probably deamidates glutamine residues to glutamate on methyl-accepting chemotaxis receptors (MCPs), playing an important role in chemotaxis. In Pseudomonas fluorescens (strain SBW25), this protein is Probable chemoreceptor glutamine deamidase CheD.